A 247-amino-acid chain; its full sequence is Large ribosomal subunit protein uL24m (247 aa).

The 34-residue stretch at 84 to 117 folds into the KOW domain; sequence FFRGDRIEVLVGKDKGKQGIVTQVIPERNWVIVE.

Belongs to the universal ribosomal protein uL24 family. Component of the mitochondrial ribosome large subunit (39S) which comprises a 16S rRNA and about 50 distinct proteins.

The protein localises to the mitochondrion. The sequence is that of Large ribosomal subunit protein uL24m (mRpL24) from Drosophila pseudoobscura pseudoobscura (Fruit fly).